The chain runs to 317 residues: METWQEVTVHVHRDAQEAVSHVLIETGSQGVAIADSADYIGQKDRFGELYPDVEQSDMIAITAYYPSSTNLADVIATINEQLAELASFGLQVGQVTVDSQELAEEDWADNWKKYYEPARITHDLTIVPSWTDYDASAGEKVIKLDPGMAFGTGTHPTTKMSLFALEQILRGGETVIDVGTGSGVLSIASSLLGAKTIYAYDLDDVAVRVAQENIDLNQGTDNIHVAAGDLLKGVSQEADVIVANILADILVLLTDDAYRLVKKEGYLILSGIISEKLDMVLEAAFSAGFFLETHMIQGEWNALVFKKTDDISGVIGG.

T158, G179, D201, and N244 together coordinate S-adenosyl-L-methionine.

Belongs to the methyltransferase superfamily. PrmA family.

Its subcellular location is the cytoplasm. It carries out the reaction L-lysyl-[protein] + 3 S-adenosyl-L-methionine = N(6),N(6),N(6)-trimethyl-L-lysyl-[protein] + 3 S-adenosyl-L-homocysteine + 3 H(+). Functionally, methylates ribosomal protein L11. This chain is Ribosomal protein L11 methyltransferase, found in Streptococcus pyogenes serotype M18 (strain MGAS8232).